The primary structure comprises 173 residues: Endoribonuclease YbeY (173 aa).

His-126, His-130, and His-136 together coordinate Zn(2+).

This sequence belongs to the endoribonuclease YbeY family. The cofactor is Zn(2+).

It localises to the cytoplasm. Functionally, single strand-specific metallo-endoribonuclease involved in late-stage 70S ribosome quality control and in maturation of the 3' terminus of the 16S rRNA. This Sinorhizobium fredii (strain NBRC 101917 / NGR234) protein is Endoribonuclease YbeY.